A 124-amino-acid polypeptide reads, in one-letter code: UPF0212 protein Hlac_0869 (124 aa).

Belongs to the UPF0212 family.

This Halorubrum lacusprofundi (strain ATCC 49239 / DSM 5036 / JCM 8891 / ACAM 34) protein is UPF0212 protein Hlac_0869.